We begin with the raw amino-acid sequence, 541 residues long: Centrosomal protein of 63 kDa (541 aa).

Met-1 bears the N-acetylmethionine mark. 2 coiled-coil regions span residues 22–199 (EAEL…ESVE) and 242–305 (MTVL…TQHA). Ser-278 carries the post-translational modification Phosphoserine. Residues 294 to 324 (QEKVKATDTQHAVEAIRPREESPAEKKYTSQ) form a disordered region. Basic and acidic residues predominate over residues 307 to 321 (EAIRPREESPAEKKY). Coiled coils occupy residues 346-485 (LQAE…KLEL) and 514-541 (HILERLDAHIEELKRESEKTVRQFTALK).

The protein belongs to the CEP63 family. In terms of assembly, interacts with CEP152 and CDK1; these interactions recruit both ligands to centrosomes. Interacts with CDK2, CDK5RAP2, WDR62, CEP90, KIAA0753/moonraker and CCDC14. CEP63, CDK5RAP2, CEP152, WDR62 are proposed to form a stepwise assembled complex at the centrosome forming a ring near parental centrioles. Interacts with CCDC57; the interaction is required for their location to proximal end of centrioles. Interacts with FXR1; promoting its stabilization. Polyubiquitinated via 'Lys-48'-linked ubiquitin, leading to its degradation. Deubiquitinated by USP36, promoting its stabilization.

It is found in the cytoplasm. The protein resides in the cytoskeleton. Its subcellular location is the microtubule organizing center. It localises to the centrosome. The protein localises to the centriole. It is found in the centriolar satellite. Its function is as follows. Required for normal spindle assembly. Plays a key role in mother-centriole-dependent centriole duplication; the function seems also to involve CEP152, CDK5RAP2 and WDR62 through a stepwise assembled complex at the centrosome that recruits CDK2 required for centriole duplication. Reported to be required for centrosomal recruitment of CEP152; however, this function has been questioned. Also recruits CDK1 to centrosomes. Plays a role in DNA damage response. Following DNA damage, such as double-strand breaks (DSBs), is removed from centrosomes; this leads to the inactivation of spindle assembly and delay in mitotic progression. Promotes stabilization of FXR1 protein by inhibiting FXR1 ubiquitination. The chain is Centrosomal protein of 63 kDa (CEP63) from Pongo abelii (Sumatran orangutan).